The primary structure comprises 758 residues: Deoxynucleotidyltransferase terminal-interacting protein 2 (758 aa).

Residues 1–21 (MVVTRSGLSRTRLQESSQQKR) show a composition bias toward polar residues. The tract at residues 1 to 176 (MVVTRSGLSR…SQSGTVSDAE (176 aa)) is disordered. Phosphoserine is present on residues Ser-17, Ser-133, Ser-137, and Ser-140. Positions 128–143 (DEVVVSEAESHVSGVS) are enriched in low complexity. Residues 155–172 (NKANSQRDSSQESQSGTV) show a composition bias toward polar residues. Phosphoserine is present on residues Ser-173 and Ser-183. A Glycyl lysine isopeptide (Lys-Gly) (interchain with G-Cter in SUMO2) cross-link involves residue Lys-210. Phosphoserine is present on residues Ser-229, Ser-240, Ser-248, and Ser-255. A compositionally biased stretch (polar residues) spans 231–255 (ATQLSARPLSQRNMPNVSDSETYNS). Disordered regions lie at residues 231–277 (ATQL…HQNL), 312–353 (KVIN…QLSS), 377–480 (DKRG…AEDL), and 501–552 (DKNF…DLLS). A Glycyl lysine isopeptide (Lys-Gly) (interchain with G-Cter in SUMO2) cross-link involves residue Lys-317. The segment covering 321 to 353 (RSLSEAQDTSLQQSVSQNHSSTPNKKPTFQLSS) has biased composition (polar residues). Phosphoserine is present on residues Ser-324 and Ser-330. Residues Lys-345 and Lys-384 each participate in a glycyl lysine isopeptide (Lys-Gly) (interchain with G-Cter in SUMO2) cross-link. Basic and acidic residues predominate over residues 377–387 (DKRGGSGKKSD). Residues 431–440 (LSMTQDTTDS) show a composition bias toward polar residues. Low complexity predominate over residues 447–456 (SSDESQQSDS). Residues Ser-476 and Ser-512 each carry the phosphoserine modification. Residues 512–541 (SEVAIEEEKEEEEKEEENSEEDSSDSDENK) are a coiled coil. Residues 515–550 (AIEEEKEEEEKEEENSEEDSSDSDENKDESSDEEDL) are compositionally biased toward acidic residues. The interval 550–607 (LLSNTKSKLLKLTSSSIDPGLNIKQLGGLYINFNVDKLQPHKETLTQIKEKKKNELLQ) is tdBR region; mediates interaction with DNTT. Residues Lys-560, Lys-586, and Lys-608 each participate in a glycyl lysine isopeptide (Lys-Gly) (interchain with G-Cter in SUMO2) cross-link. Thr-612 carries the post-translational modification Phosphothreonine. Positions 621 to 647 (VPPYSESKHRLQKQRRKERQKTAGNGW) are disordered. Lys-628 participates in a covalent cross-link: Glycyl lysine isopeptide (Lys-Gly) (interchain with G-Cter in SUMO2). A compositionally biased stretch (basic residues) spans 630 to 639 (RLQKQRRKER). Residues Lys-651, Lys-660, Lys-688, and Lys-733 each participate in a glycyl lysine isopeptide (Lys-Gly) (interchain with G-Cter in SUMO2) cross-link.

As to quaternary structure, forms a ternary complex with DNTT and core histone; interaction with PCNA releases DNTT and H2A/H2B histones from this ternary complex. Interacts with ESR1, ESR2, PPARG and RXRA. Part of the small subunit (SSU) processome, composed of more than 70 proteins and the RNA chaperone small nucleolar RNA (snoRNA) U3.

It localises to the nucleus. It is found in the nucleolus. Regulates the transcriptional activity of DNTT and ESR1. May function as a chromatin remodeling protein. Part of the small subunit (SSU) processome, first precursor of the small eukaryotic ribosomal subunit. During the assembly of the SSU processome in the nucleolus, many ribosome biogenesis factors, an RNA chaperone and ribosomal proteins associate with the nascent pre-rRNA and work in concert to generate RNA folding, modifications, rearrangements and cleavage as well as targeted degradation of pre-ribosomal RNA by the RNA exosome. In Mus musculus (Mouse), this protein is Deoxynucleotidyltransferase terminal-interacting protein 2 (Dnttip2).